A 418-amino-acid chain; its full sequence is Enolase 1 (418 aa).

Gln162 lines the (2R)-2-phosphoglycerate pocket. Glu204 (proton donor) is an active-site residue. Mg(2+) contacts are provided by Asp241, Glu285, and Asp312. Residues Lys337, Arg366, Ser367, and Lys388 each contribute to the (2R)-2-phosphoglycerate site. Lys337 acts as the Proton acceptor in catalysis.

It belongs to the enolase family. It depends on Mg(2+) as a cofactor.

Its subcellular location is the cytoplasm. The protein resides in the secreted. It is found in the cell surface. It catalyses the reaction (2R)-2-phosphoglycerate = phosphoenolpyruvate + H2O. It functions in the pathway carbohydrate degradation; glycolysis; pyruvate from D-glyceraldehyde 3-phosphate: step 4/5. Catalyzes the reversible conversion of 2-phosphoglycerate (2-PG) into phosphoenolpyruvate (PEP). It is essential for the degradation of carbohydrates via glycolysis. The sequence is that of Enolase 1 from Lactococcus lactis subsp. cremoris (strain SK11).